The sequence spans 2641 residues: Inverse autotransporter adhesin YeeJ (2641 aa).

Residues 1–25 (MGIKLRRLTAGICLITQLVFPMAAA) form the signal peptide. Positions 50 to 98 (VPYTLGALESAQSVAERFGISVAELRKLNQFRTFARGFDNVRQGDELDV) constitute a LysM domain. The segment at 125-400 (TSQQIGSLLA…SRFDLVDRNN (276 aa)) is inverse autotransporter. An invasin 3 domain region spans residues 513-605 (QKDSSVSLSS…GVDAAKAPAV (93 aa)). Big-1 domains are found at residues 617-711 (HSSI…AGFI), 721-815 (IATL…VSFV), 822-913 (QVDL…VIFI), 920-1017 (ALTL…MTFV), 1024-1116 (VVVL…VNIA), 1123-1220 (QVTL…VTFV), 1227-1319 (VVVL…VNIA), 1326-1423 (QVTL…VTFV), 1430-1523 (LVVL…VHFI), 1531-1633 (IIEL…SINV), 1641-1734 (HLTL…VTYV), 1741-1837 (EISL…VNFI), 1844-1941 (QVNL…VTLI), 1948-2032 (KLAS…PTEV), 2048-2141 (ITSL…VIDQ), 2142-2235 (KLTL…IVKV), and 2244-2336 (VASF…ITLV). Positions 2538–2641 (KSWWVNAGDA…FAYATCYKNL (104 aa)) are C-type lectin domain.

It belongs to the intimin/invasin family.

It is found in the cell outer membrane. Functionally, a probable inverse autotransporter, it may be involved in biofilm formation and cell adhesion. May bind peptidoglycan via its LysM domain. The protein is Inverse autotransporter adhesin YeeJ (yeeJ) of Escherichia coli O157:H7.